The following is a 277-amino-acid chain: Carbonyl reductase [NADPH] 1 (277 aa).

Position 2 is an N-acetylserine (S2). Phosphoserine is present on residues S2 and S30. NADP(+) contacts are provided by residues 10–34 (VTGG…GDVV), 63–64 (DI), and N90. Glutathione-binding positions include 95–97 (FKV) and Q106. Residue S140 coordinates substrate. 193–194 (AY) provides a ligand contact to glutathione. Y194 functions as the Proton acceptor in the catalytic mechanism. Residues 194–198 (YGVTK) and 231–233 (VRT) contribute to the NADP(+) site. K239 is modified (N6-1-carboxyethyl lysine).

The protein belongs to the short-chain dehydrogenases/reductases (SDR) family. Monomer. Expressed in kidney (at protein level).

Its subcellular location is the cytoplasm. The enzyme catalyses a secondary alcohol + NADP(+) = a ketone + NADPH + H(+). It carries out the reaction a primary alcohol + NADP(+) = an aldehyde + NADPH + H(+). The catalysed reaction is prostaglandin F2alpha + NADP(+) = prostaglandin E2 + NADPH + H(+). It catalyses the reaction prostaglandin E1 + NADP(+) = 15-oxoprostaglandin E1 + NADPH + H(+). The enzyme catalyses menadione + NADPH + H(+) = menadiol + NADP(+). It carries out the reaction prostaglandin D2 + NADP(+) = 15-oxoprostaglandin D2 + NADPH + H(+). The catalysed reaction is prostaglandin E2 + NADP(+) = 15-oxoprostaglandin E2 + NADPH + H(+). It catalyses the reaction prostaglandin F2alpha + NADP(+) = 15-oxoprostaglandin F2alpha + NADPH + H(+). The enzyme catalyses daunorubicin + NADPH + H(+) = 13-dihydrodaunorubicin + NADP(+). It carries out the reaction S-nitrosoglutathione + NADPH + H(+) = S-(hydroxysulfenamide)glutathione + NADP(+). The catalysed reaction is cortisol + NADPH + H(+) = 20beta-dihydrocortisol + NADP(+). It catalyses the reaction corticosterone + NADPH + H(+) = 20beta-dihydrocorticosterone + NADP(+). With respect to regulation, inhibited by quercetin, rutenin and its derivatives. Its function is as follows. NADPH-dependent reductase with broad substrate specificity. Catalyzes the reduction of a wide variety of carbonyl compounds including quinones, prostaglandins, menadione, plus various xenobiotics. Catalyzes the reduction of the antitumor anthracyclines doxorubicin and daunorubicin to the cardiotoxic compounds doxorubicinol and daunorubicinol. Can convert prostaglandin E to prostaglandin F2-alpha. Can bind glutathione, which explains its higher affinity for glutathione-conjugated substrates. Catalyzes the reduction of S-nitrosoglutathione. In addition, participates in the glucocorticoid metabolism by catalyzing the NADPH-dependent cortisol/corticosterone into 20beta-dihydrocortisol (20b-DHF) or 20beta-corticosterone (20b-DHB), which are weak agonists of NR3C1 and NR3C2 in adipose tissue. The protein is Carbonyl reductase [NADPH] 1 of Homo sapiens (Human).